A 303-amino-acid chain; its full sequence is Glycine--tRNA ligase alpha subunit (303 aa).

It belongs to the class-II aminoacyl-tRNA synthetase family. As to quaternary structure, tetramer of two alpha and two beta subunits.

The protein localises to the cytoplasm. The enzyme catalyses tRNA(Gly) + glycine + ATP = glycyl-tRNA(Gly) + AMP + diphosphate. In Salmonella agona (strain SL483), this protein is Glycine--tRNA ligase alpha subunit.